The following is a 344-amino-acid chain: Golgi-associated RAB2 interactor protein 1B (344 aa).

Positions 271 to 293 are disordered; it reads FRSSRKVETNKNSSGKDSSREDS.

It belongs to the GARIN family.

Its subcellular location is the golgi apparatus. In terms of biological role, RAB2B effector protein required for accurate acrosome formation and normal male fertility. In complex with RAB2A/RAB2B, seems to suppress excessive vesicle trafficking during acrosome formation. In Homo sapiens (Human), this protein is Golgi-associated RAB2 interactor protein 1B.